The following is a 188-amino-acid chain: Pupal cuticle protein Edg-84A (188 aa).

Positions 1–17 (MLVKTALFVTLIGLAQA) are cleaved as a signal peptide. Residues 19–67 (PLPAKSSGSEDTYDSHPQYSFNYDVQDPETGDVKSQSESRDGDVVHGQY) are disordered. Over residues 24 to 41 (SSGSEDTYDSHPQYSFNY) the composition is skewed to polar residues. One can recognise a Chitin-binding type R&amp;R domain in the interval 34-100 (HPQYSFNYDV…AVVRREPLSS (67 aa)). A compositionally biased stretch (basic and acidic residues) spans 49–62 (GDVKSQSESRDGDV).

As to expression, imaginal (anterior) epidermis.

Its function is as follows. Component of the cuticle of the pupa of fruit fly. This chain is Pupal cuticle protein Edg-84A (Edg84A), found in Drosophila melanogaster (Fruit fly).